Reading from the N-terminus, the 180-residue chain is Cell division protein SepF (180 aa).

The tract at residues 1 to 66 (MAFSFKSFFG…NRNGFAYDNG (66 aa)) is disordered. The span at 12-23 (ADDEEEEYEDSG) shows a compositional bias: acidic residues. The segment covering 24-57 (YEQQPNQGQQQPVNSQQQNTSNQSYSGYNNQNQN) has biased composition (low complexity).

The protein belongs to the SepF family. As to quaternary structure, homodimer. Interacts with FtsZ.

The protein resides in the cytoplasm. In terms of biological role, cell division protein that is part of the divisome complex and is recruited early to the Z-ring. Probably stimulates Z-ring formation, perhaps through the cross-linking of FtsZ protofilaments. Its function overlaps with FtsA. This is Cell division protein SepF from Oenococcus oeni (strain ATCC BAA-331 / PSU-1).